A 231-amino-acid polypeptide reads, in one-letter code: Aldehyde decarbonylase (231 aa).

Fe cation contacts are provided by glutamate 32, glutamate 60, histidine 63, glutamate 115, and histidine 147.

The protein belongs to the aldehyde decarbonylase family. It depends on Binds 2 metal cations per subunit. The catalytic dinuclear metal-binding site could be either a di-iron or a manganese-iron cofactor. as a cofactor.

The catalysed reaction is a long-chain fatty aldehyde + 2 NADPH + O2 + H(+) = a long-chain alkane + formate + 2 NADP(+) + H2O. Its function is as follows. Catalyzes the decarbonylation of fatty aldehydes to alkanes. Requires the presence of ferredoxin, ferredoxin reductase and NADPH for in vitro decarbonylase activity. Involved in the biosynthesis of alkanes, mainly heptadecane and pentadecane. The protein is Aldehyde decarbonylase of Synechocystis sp. (strain ATCC 27184 / PCC 6803 / Kazusa).